A 132-amino-acid chain; its full sequence is Fatty acid-binding protein, intestinal (132 aa).

A2 bears the N-acetylalanine mark. 2 residues coordinate hexadecanoate: W83 and R107. W83 and R107 together coordinate tetradecanoate.

Belongs to the calycin superfamily. Fatty-acid binding protein (FABP) family.

The protein resides in the cytoplasm. Its function is as follows. FABPs are thought to play a role in the intracellular transport of long-chain fatty acids and their acyl-CoA esters. FABP2 is probably involved in triglyceride-rich lipoprotein synthesis. Binds saturated long-chain fatty acids with a high affinity, but binds with a lower affinity to unsaturated long-chain fatty acids. FABP2 may also help maintain energy homeostasis by functioning as a lipid sensor. The chain is Fatty acid-binding protein, intestinal (FABP2) from Sus scrofa (Pig).